A 469-amino-acid polypeptide reads, in one-letter code: GTPase Der (469 aa).

2 consecutive EngA-type G domains span residues 3–166 and 177–350; these read PVIA…PEDE and LRLA…ESAN. Residues 9–16, 56–60, 118–121, 183–190, 230–234, and 295–298 contribute to the GTP site; these read GRPNVGKS, DTGGI, NKVD, DTAGV, and NKWD. The region spanning 351–435 is the KH-like domain; sequence LKVSPAKLTQ…PVKIEFKTSE (85 aa).

This sequence belongs to the TRAFAC class TrmE-Era-EngA-EngB-Septin-like GTPase superfamily. EngA (Der) GTPase family. As to quaternary structure, associates with the 50S ribosomal subunit.

Functionally, GTPase that plays an essential role in the late steps of ribosome biogenesis. This is GTPase Der from Acinetobacter baumannii (strain SDF).